The sequence spans 253 residues: Indole-3-glycerol phosphate synthase (253 aa).

This sequence belongs to the TrpC family.

It carries out the reaction 1-(2-carboxyphenylamino)-1-deoxy-D-ribulose 5-phosphate + H(+) = (1S,2R)-1-C-(indol-3-yl)glycerol 3-phosphate + CO2 + H2O. Its pathway is amino-acid biosynthesis; L-tryptophan biosynthesis; L-tryptophan from chorismate: step 4/5. The polypeptide is Indole-3-glycerol phosphate synthase (Bacillus thuringiensis subsp. konkukian (strain 97-27)).